Here is a 394-residue protein sequence, read N- to C-terminus: Tubby-like F-box protein 2 (394 aa).

Residues 21 to 44 (SKRSWSKSSHIAPDQTTPPLDNIP) are disordered. Positions 26-44 (SKSSHIAPDQTTPPLDNIP) are enriched in polar residues. The F-box domain maps to 46–101 (SPWASLPPELLHDIIWRVEESETAWPARAAVVSCASVCKSWRGITMEIVRIPEQCG). 2 disordered regions span residues 200–225 (ASSTAQAQPNRRLHPKQAAPKLPTNS) and 268–297 (IEEEVSSSPSPKGETITTDKEIPDNSPSLR).

The protein belongs to the TUB family. As to expression, ubiquitous.

This chain is Tubby-like F-box protein 2, found in Arabidopsis thaliana (Mouse-ear cress).